The sequence spans 201 residues: Recombination protein RecR (201 aa).

A C4-type zinc finger spans residues 60–75; that stretch reads CSCCGNVDTSDPCTIC. The region spanning 83–178 is the Toprim domain; it reads ATLIVVEDVS…RVTRLAHGVP (96 aa).

This sequence belongs to the RecR family.

Functionally, may play a role in DNA repair. It seems to be involved in an RecBC-independent recombinational process of DNA repair. It may act with RecF and RecO. The protein is Recombination protein RecR of Brucella abortus biovar 1 (strain 9-941).